Here is a 311-residue protein sequence, read N- to C-terminus: Putative RNA-binding protein R05D3.8 (311 aa).

Residues 155-235 (KRLFVSYFPL…RRAVLKESVK (81 aa)) enclose the RRM domain. Residues 261–270 (TPSRPVTSVH) are compositionally biased toward polar residues. The interval 261–311 (TPSRPVTSVHASSSASSNHYDPSAAAGYAPLYHQPPESDPLSQCGYGPRKW) is disordered.

In Caenorhabditis elegans, this protein is Putative RNA-binding protein R05D3.8.